Consider the following 327-residue polypeptide: Undecaprenyl-phosphate 4-deoxy-4-formamido-L-arabinose transferase (327 aa).

Helical transmembrane passes span 233–253 (ILSL…LLLI) and 268–288 (VFTL…GMGL).

The protein belongs to the glycosyltransferase 2 family.

It localises to the cell inner membrane. It catalyses the reaction UDP-4-deoxy-4-formamido-beta-L-arabinose + di-trans,octa-cis-undecaprenyl phosphate = 4-deoxy-4-formamido-alpha-L-arabinopyranosyl di-trans,octa-cis-undecaprenyl phosphate + UDP. It functions in the pathway glycolipid biosynthesis; 4-amino-4-deoxy-alpha-L-arabinose undecaprenyl phosphate biosynthesis; 4-amino-4-deoxy-alpha-L-arabinose undecaprenyl phosphate from UDP-4-deoxy-4-formamido-beta-L-arabinose and undecaprenyl phosphate: step 1/2. The protein operates within bacterial outer membrane biogenesis; lipopolysaccharide biosynthesis. In terms of biological role, catalyzes the transfer of 4-deoxy-4-formamido-L-arabinose from UDP to undecaprenyl phosphate. The modified arabinose is attached to lipid A and is required for resistance to polymyxin and cationic antimicrobial peptides. This chain is Undecaprenyl-phosphate 4-deoxy-4-formamido-L-arabinose transferase, found in Pectobacterium atrosepticum (strain SCRI 1043 / ATCC BAA-672) (Erwinia carotovora subsp. atroseptica).